The following is a 185-amino-acid chain: MPLSLRLAPSPTSFRYSPITSTGAGGFSPVKQHCRIPNSGVATKIGFCSGGGGVLDSGRRIGSCVVRCSLETVNVTVGQVTEVDKDTFWPIVKAAGDKIVVLDMYTQWCGPCKVIAPKYKELSEKYQDMVFLKLDCNQDNKPLAKELGIRVVPTFKILKDNKVVKEVTGAKYEDLLAAIEAARSG.

A Thioredoxin domain is found at arginine 59–serine 184. Catalysis depends on nucleophile residues cysteine 109 and cysteine 112. Cysteines 109 and 112 form a disulfide. Residue cysteine 136 is modified to S-glutathionyl cysteine; transient.

This sequence belongs to the thioredoxin family. Plant F-type subfamily. In terms of processing, glutathionylation at Cys-136 decreases its ability to be reduced by ferredoxin-thioredoxin reductase and reduces its efficiency in activating target chloroplastic enzymes.

It localises to the plastid. It is found in the chloroplast stroma. Functionally, probable thiol-disulfide oxidoreductase involved in the redox regulation of enzymes of both reductive pentose phosphate pathway (Calvin-Benson cycle) and oxidative pentose phosphate pathway. This is Thioredoxin F2, chloroplastic from Arabidopsis thaliana (Mouse-ear cress).